Consider the following 261-residue polypeptide: tRNA pseudouridine synthase A (261 aa).

Asp-51 serves as the catalytic Nucleophile. Tyr-109 is a binding site for substrate.

This sequence belongs to the tRNA pseudouridine synthase TruA family. In terms of assembly, homodimer.

The catalysed reaction is uridine(38/39/40) in tRNA = pseudouridine(38/39/40) in tRNA. Functionally, formation of pseudouridine at positions 38, 39 and 40 in the anticodon stem and loop of transfer RNAs. The protein is tRNA pseudouridine synthase A of Shewanella frigidimarina (strain NCIMB 400).